The sequence spans 370 residues: Probable endopolygalacturonase A (370 aa).

An N-terminal signal peptide occupies residues 1 to 19 (MPSAKPLFCLATLAGAALA). Residues 20 to 32 (APAPSRVSDFTKR) constitute a propeptide that is removed on maturation. Cys35 and Cys50 are oxidised to a cystine. PbH1 repeat units lie at residues 162 to 192 (SDNLVIEDVTIDNSDGDSEGGHNTDGFDISE), 193 to 214 (STYITITGATVKNQDDCVAINS), 215 to 235 (GENIYFSGGTCSGGHGLSIGS), 244 to 265 (VKNVTFIDSTVSDSENGVRIKT), 273 to 295 (VEDITYSNIQLSGISDYGIVIEQ), and 307 to 352 (SNGV…DITG). The active-site Proton donor is Asp207. A disulfide bond links Cys209 and Cys225. His229 is a catalytic residue. The N-linked (GlcNAc...) asparagine glycan is linked to Asn246. Cystine bridges form between Cys335–Cys340 and Cys359–Cys368.

The protein belongs to the glycosyl hydrolase 28 family.

It localises to the secreted. The catalysed reaction is (1,4-alpha-D-galacturonosyl)n+m + H2O = (1,4-alpha-D-galacturonosyl)n + (1,4-alpha-D-galacturonosyl)m.. Involved in maceration and soft-rotting of plant tissue. Hydrolyzes the 1,4-alpha glycosidic bonds of de-esterified pectate in the smooth region of the plant cell wall. The polypeptide is Probable endopolygalacturonase A (pgaA) (Aspergillus niger (strain ATCC MYA-4892 / CBS 513.88 / FGSC A1513)).